The primary structure comprises 483 residues: MTETKTLKNFIGGQWVASTSGKEEIVPNPATGEVLAKVPISSREELDAAVAAAKEAFREWRKVPVPRRARILFRYQQLLVEHWEELARLVTLENGKVYEDAYGEVQRGIECVEFAAGIPTLMMGQQLPDIATGIESGMYRYPLGVVAGITPFNFPMMVPCWMFPLAIACGNTFVLKPSERTPLLANRLAELFTEAGLPAGVLNIVHGAHEVVNGILEHKDIKAVSFVGSQPVAEYVYKTAAAYGKRVQALAGAKNHSIVMPDADLDMAVTNIINAAFGSAGERCMACSVVVAVGDIADELVERLKKAADRIQIGNGLDQGVFLGPVIRESHKERTIKYIEIGEREGALLVRDGRRDAATSGKGYFVGPTIFDHVKPGMTIWTDEIFAPVLSVVRARDLDEAIEIANRSEFANGACIYTDSAKAIRQFREEIDAGMLGVNVAVPAPMAFFPFSGYKNSFYGDLHANGRDGVEFYTRKKMVTARH.

Residues phenylalanine 152, lysine 176, glutamate 179, arginine 180, and serine 229 each coordinate NAD(+). Cysteine 284 acts as the Nucleophile in catalysis. Residue glutamate 384 coordinates NAD(+).

Belongs to the aldehyde dehydrogenase family. IolA subfamily. As to quaternary structure, homotetramer.

It catalyses the reaction 3-oxopropanoate + NAD(+) + CoA + H2O = hydrogencarbonate + acetyl-CoA + NADH + H(+). The catalysed reaction is 2-methyl-3-oxopropanoate + NAD(+) + CoA + H2O = propanoyl-CoA + hydrogencarbonate + NADH + H(+). It functions in the pathway polyol metabolism; myo-inositol degradation into acetyl-CoA; acetyl-CoA from myo-inositol: step 7/7. Catalyzes the oxidation of malonate semialdehyde (MSA) and methylmalonate semialdehyde (MMSA) into acetyl-CoA and propanoyl-CoA, respectively. Is involved in a myo-inositol catabolic pathway. Bicarbonate, and not CO2, is the end-product of the enzymatic reaction. The protein is Malonate-semialdehyde dehydrogenase 2 of Geobacillus thermodenitrificans (strain NG80-2).